Reading from the N-terminus, the 714-residue chain is Rho-GTPase-activating protein RGD2 (714 aa).

The region spanning 2 to 441 is the F-BAR domain; it reads LSFCDYFWSE…LENDIDPTAD (440 aa). A DEP domain is found at 218-298; sequence PKTDYKLPLI…WKNTAYMFAN (81 aa). In terms of domain architecture, Rho-GAP spans 475–704; sequence VDLETRCRLD…DLLTHKKQIF (230 aa).

In terms of assembly, interacts with CDC42 and RHO5.

Its function is as follows. Acts in signal transduction. Activates CDC42 and RHO5. The sequence is that of Rho-GTPase-activating protein RGD2 (RGD2) from Saccharomyces cerevisiae (strain ATCC 204508 / S288c) (Baker's yeast).